The sequence spans 556 residues: Formate--tetrahydrofolate ligase (556 aa).

65 to 72 (TPAGEGKT) is a binding site for ATP.

The protein belongs to the formate--tetrahydrofolate ligase family.

The catalysed reaction is (6S)-5,6,7,8-tetrahydrofolate + formate + ATP = (6R)-10-formyltetrahydrofolate + ADP + phosphate. Its pathway is one-carbon metabolism; tetrahydrofolate interconversion. In Proteus mirabilis (strain HI4320), this protein is Formate--tetrahydrofolate ligase.